The following is a 380-amino-acid chain: Capsular polysaccharide biosynthesis glycosyltransferase CapM (380 aa).

It belongs to the glycosyltransferase group 1 family. Glycosyltransferase 4 subfamily.

Its pathway is capsule biogenesis; capsule polysaccharide biosynthesis. Its function is as follows. Required for the biosynthesis of type 1 capsular polysaccharide. This chain is Capsular polysaccharide biosynthesis glycosyltransferase CapM (capM), found in Staphylococcus aureus.